A 366-amino-acid chain; its full sequence is 3-dehydroquinate synthase (366 aa).

Residues 75–80 (DGEQYK), 109–113 (GVIGD), 133–134 (TT), K146, K155, and 173–176 (CLST) contribute to the NAD(+) site. Positions 188, 251, and 268 each coordinate Zn(2+).

This sequence belongs to the sugar phosphate cyclases superfamily. Dehydroquinate synthase family. Requires Co(2+) as cofactor. The cofactor is Zn(2+). It depends on NAD(+) as a cofactor.

Its subcellular location is the cytoplasm. The catalysed reaction is 7-phospho-2-dehydro-3-deoxy-D-arabino-heptonate = 3-dehydroquinate + phosphate. It participates in metabolic intermediate biosynthesis; chorismate biosynthesis; chorismate from D-erythrose 4-phosphate and phosphoenolpyruvate: step 2/7. Catalyzes the conversion of 3-deoxy-D-arabino-heptulosonate 7-phosphate (DAHP) to dehydroquinate (DHQ). In Vibrio campbellii (strain ATCC BAA-1116), this protein is 3-dehydroquinate synthase.